The primary structure comprises 220 residues: MTQDEMKKAAGWAALKYVERDSIVGVGTGSTVNHFIDALATMKADIEGAVSSSEASTQKMKALGIPVYDLNSVDRLSVYVDGADEINDRMDMIKGGGAALTREKIVAAVAEKFICIVDNTKQVDILGEFPLPVEVIPMARSYVARQLVKLGGDPVYREGVVTDNGNVILDVYNLKILNPKELESQINEIVGVVTNGLFAKRGADVLLVGTPDGVKTFTAE.

Residues 28 to 31 (TGST), 81 to 84 (DGAD), and 94 to 97 (KGGG) contribute to the substrate site. The Proton acceptor role is filled by E103. K121 contributes to the substrate binding site.

It belongs to the ribose 5-phosphate isomerase family. In terms of assembly, homodimer.

It catalyses the reaction aldehydo-D-ribose 5-phosphate = D-ribulose 5-phosphate. It participates in carbohydrate degradation; pentose phosphate pathway; D-ribose 5-phosphate from D-ribulose 5-phosphate (non-oxidative stage): step 1/1. Catalyzes the reversible conversion of ribose-5-phosphate to ribulose 5-phosphate. The sequence is that of Ribose-5-phosphate isomerase A from Shewanella baltica (strain OS223).